The following is a 749-amino-acid chain: Patatin-like phospholipase domain-containing protein An01g04180 (749 aa).

The interval methionine 1–tyrosine 21 is disordered. Residues tryptophan 87–threonine 107 traverse the membrane as a helical segment. The PNPLA domain maps to leucine 277 to asparagine 468. A GXSXG motif is present at residues glycine 308 to glycine 312. Serine 310 (nucleophile) is an active-site residue. The active-site Proton acceptor is the aspartate 455. The tract at residues alanine 619–valine 726 is disordered. Positions proline 649–aspartate 664 are enriched in basic and acidic residues. A compositionally biased stretch (low complexity) spans serine 685–leucine 707.

Belongs to the PLPL family.

It is found in the membrane. In terms of biological role, probable lipid hydrolase. This chain is Patatin-like phospholipase domain-containing protein An01g04180, found in Aspergillus niger (strain ATCC MYA-4892 / CBS 513.88 / FGSC A1513).